The sequence spans 89 residues: Small ribosomal subunit protein uS15 (89 aa).

The protein belongs to the universal ribosomal protein uS15 family. In terms of assembly, part of the 30S ribosomal subunit. Forms a bridge to the 50S subunit in the 70S ribosome, contacting the 23S rRNA.

Its function is as follows. One of the primary rRNA binding proteins, it binds directly to 16S rRNA where it helps nucleate assembly of the platform of the 30S subunit by binding and bridging several RNA helices of the 16S rRNA. Functionally, forms an intersubunit bridge (bridge B4) with the 23S rRNA of the 50S subunit in the ribosome. The sequence is that of Small ribosomal subunit protein uS15 from Roseiflexus sp. (strain RS-1).